The sequence spans 106 residues: Small ribosomal subunit protein uS10 (106 aa).

The protein belongs to the universal ribosomal protein uS10 family. In terms of assembly, part of the 30S ribosomal subunit.

Involved in the binding of tRNA to the ribosomes. The chain is Small ribosomal subunit protein uS10 from Prochlorococcus marinus (strain MIT 9515).